The following is a 288-amino-acid chain: Homoserine kinase (288 aa).

Position 78-88 (78-88 (PLARGLGSSSS)) interacts with ATP.

The protein belongs to the GHMP kinase family. Homoserine kinase subfamily.

It is found in the cytoplasm. It carries out the reaction L-homoserine + ATP = O-phospho-L-homoserine + ADP + H(+). Its pathway is amino-acid biosynthesis; L-threonine biosynthesis; L-threonine from L-aspartate: step 4/5. Functionally, catalyzes the ATP-dependent phosphorylation of L-homoserine to L-homoserine phosphate. The sequence is that of Homoserine kinase from Streptococcus agalactiae serotype III (strain NEM316).